A 157-amino-acid chain; its full sequence is Small ribosomal subunit protein uS7 (157 aa).

This sequence belongs to the universal ribosomal protein uS7 family. As to quaternary structure, part of the 30S ribosomal subunit. Contacts proteins S9 and S11.

In terms of biological role, one of the primary rRNA binding proteins, it binds directly to 16S rRNA where it nucleates assembly of the head domain of the 30S subunit. Is located at the subunit interface close to the decoding center, probably blocks exit of the E-site tRNA. This Salinibacter ruber (strain DSM 13855 / M31) protein is Small ribosomal subunit protein uS7.